The following is a 430-amino-acid chain: DNA damage-inducible protein DIN7 (430 aa).

The segment at 1 to 96 (MGIPGLLPQL…HTETRRRKKR (96 aa)) is N-domain. D30, D78, E150, D152, D171, D173, and D227 together coordinate Mg(2+). The interval 114–247 (NAMEYFQKSV…VTAMKIVKRY (134 aa)) is I-domain.

It belongs to the XPG/RAD2 endonuclease family. Mg(2+) is required as a cofactor.

The protein resides in the nucleus. Functionally, 5'-&gt;3' double-stranded DNA exonuclease. This Saccharomyces cerevisiae (strain ATCC 204508 / S288c) (Baker's yeast) protein is DNA damage-inducible protein DIN7 (DIN7).